Reading from the N-terminus, the 193-residue chain is MKDFVRLQSSFLLCTILTLSEQESVSVGCTSSMFWVVAEPTLLGQDHILHSDEASLGTGCPVTNVTAKGYEFNYPATQCGIQKEVFSYVTVFYSALHCNIMHKGVTGKIPLMCIVYGSSLDTTSSTIHNNLTEFQNDPPATNSYSPWNLTNASLFGLTRIPYFQNSSVEASHQSLLLNMSHPLVHESANVAIF.

The signal sequence occupies residues 1-22 (MKDFVRLQSSFLLCTILTLSEQ). Residues N64, N130, N148, N151, N165, and N178 are each glycosylated (N-linked (GlcNAc...) asparagine).

Belongs to the PLAC1 family.

Its subcellular location is the secreted. The protein is Oocyte-secreted protein 3 of Homo sapiens (Human).